The chain runs to 429 residues: Histidinol dehydrogenase (429 aa).

Tyrosine 127, glutamine 188, and asparagine 211 together coordinate NAD(+). Substrate-binding residues include serine 234, glutamine 256, and histidine 259. The Zn(2+) site is built by glutamine 256 and histidine 259. Active-site proton acceptor residues include glutamate 324 and histidine 325. Positions 325, 358, 412, and 417 each coordinate substrate. Aspartate 358 serves as a coordination point for Zn(2+). Residue histidine 417 participates in Zn(2+) binding.

This sequence belongs to the histidinol dehydrogenase family. Zn(2+) is required as a cofactor.

The enzyme catalyses L-histidinol + 2 NAD(+) + H2O = L-histidine + 2 NADH + 3 H(+). It participates in amino-acid biosynthesis; L-histidine biosynthesis; L-histidine from 5-phospho-alpha-D-ribose 1-diphosphate: step 9/9. Functionally, catalyzes the sequential NAD-dependent oxidations of L-histidinol to L-histidinaldehyde and then to L-histidine. The polypeptide is Histidinol dehydrogenase (Bacillus anthracis).